The following is a 335-amino-acid chain: Methionine aminopeptidase 1D, mitochondrial (335 aa).

A mitochondrion-targeting transit peptide spans 1 to 19 (MAAPIGVPLLVRGGCQRIL). Histidine 161 is a substrate binding site. A divalent metal cation-binding residues include aspartate 178, aspartate 189, and histidine 252. Histidine 259 contacts substrate. The a divalent metal cation site is built by glutamate 284 and glutamate 315.

It belongs to the peptidase M24A family. Methionine aminopeptidase type 1 subfamily. It depends on Co(2+) as a cofactor. Zn(2+) serves as cofactor. Requires Mn(2+) as cofactor. Fe(2+) is required as a cofactor.

The protein localises to the mitochondrion. The enzyme catalyses Release of N-terminal amino acids, preferentially methionine, from peptides and arylamides.. Its function is as follows. Removes the N-terminal methionine from nascent proteins. The N-terminal methionine is often cleaved when the second residue in the primary sequence is small and uncharged (Met-Ala-, Cys, Gly, Pro, Ser, Thr, or Val). Requires deformylation of the N(alpha)-formylated initiator methionine before it can be hydrolyzed. This chain is Methionine aminopeptidase 1D, mitochondrial (Metap1d), found in Mus musculus (Mouse).